Consider the following 1297-residue polypeptide: DNA-directed RNA polymerase subunit beta' (1297 aa).

Cys60, Cys62, Cys75, and Cys78 together coordinate Zn(2+). Asp535, Asp537, and Asp539 together coordinate Mg(2+). Positions 883, 961, 968, and 971 each coordinate Zn(2+).

It belongs to the RNA polymerase beta' chain family. As to quaternary structure, the RNAP catalytic core consists of 2 alpha, 1 beta, 1 beta' and 1 omega subunit. When a sigma factor is associated with the core the holoenzyme is formed, which can initiate transcription. Mg(2+) serves as cofactor. Requires Zn(2+) as cofactor.

The catalysed reaction is RNA(n) + a ribonucleoside 5'-triphosphate = RNA(n+1) + diphosphate. In terms of biological role, DNA-dependent RNA polymerase catalyzes the transcription of DNA into RNA using the four ribonucleoside triphosphates as substrates. The chain is DNA-directed RNA polymerase subunit beta' from Salinispora arenicola (strain CNS-205).